A 55-amino-acid chain; its full sequence is ATP synthase F(0) complex subunit 8 (55 aa).

A helical membrane pass occupies residues 4-24; that stretch reads LNPAPWFAILVFSWLVFLTVI. Residues 34 to 55 are disordered; that stretch reads TNEPTSQSTEKAKPEPWNWPWH.

This sequence belongs to the ATPase protein 8 family. As to quaternary structure, component of the ATP synthase complex composed at least of ATP5F1A/subunit alpha, ATP5F1B/subunit beta, ATP5MC1/subunit c (homooctomer), MT-ATP6/subunit a, MT-ATP8/subunit 8, ATP5ME/subunit e, ATP5MF/subunit f, ATP5MG/subunit g, ATP5MK/subunit k, ATP5MJ/subunit j, ATP5F1C/subunit gamma, ATP5F1D/subunit delta, ATP5F1E/subunit epsilon, ATP5PF/subunit F6, ATP5PB/subunit b, ATP5PD/subunit d, ATP5PO/subunit OSCP. ATP synthase complex consists of a soluble F(1) head domain (subunits alpha(3) and beta(3)) - the catalytic core - and a membrane F(0) domain - the membrane proton channel (subunits c, a, 8, e, f, g, k and j). These two domains are linked by a central stalk (subunits gamma, delta, and epsilon) rotating inside the F1 region and a stationary peripheral stalk (subunits F6, b, d, and OSCP).

The protein resides in the mitochondrion membrane. Subunit 8, of the mitochondrial membrane ATP synthase complex (F(1)F(0) ATP synthase or Complex V) that produces ATP from ADP in the presence of a proton gradient across the membrane which is generated by electron transport complexes of the respiratory chain. ATP synthase complex consist of a soluble F(1) head domain - the catalytic core - and a membrane F(1) domain - the membrane proton channel. These two domains are linked by a central stalk rotating inside the F(1) region and a stationary peripheral stalk. During catalysis, ATP synthesis in the catalytic domain of F(1) is coupled via a rotary mechanism of the central stalk subunits to proton translocation. In vivo, can only synthesize ATP although its ATP hydrolase activity can be activated artificially in vitro. Part of the complex F(0) domain. The sequence is that of ATP synthase F(0) complex subunit 8 from Oncorhynchus mykiss (Rainbow trout).